Consider the following 1538-residue polypeptide: Arf-GAP with Rho-GAP domain, ANK repeat and PH domain-containing protein 3 (1538 aa).

Positions 4-68 (PQDLDIAVWL…LRLLRAGSAE (65 aa)) constitute an SAM domain. Disordered stretches follow at residues 72 to 97 (DSHL…PVPK), 125 to 149 (SRNS…SVPN), and 215 to 242 (ASDR…EDAG). The segment covering 82–97 (TPSPAPDAQPPKPVPK) has biased composition (pro residues). Residues 216–241 (SDRRDGRGVCQERAEHRQDLETREDA) show a composition bias toward basic and acidic residues. PH domains lie at 282-374 (VPLL…SCLK) and 389-478 (RPLR…EAVT). The region spanning 479-606 (ETLSDYEVAE…LFRKPHPRHP (128 aa)) is the Arf-GAP domain. PH domains follow at residues 671-785 (ATYR…FSPL) and 795-901 (LLRM…AGGG). The 182-residue stretch at 903–1084 (TGLQEQQMSR…ELIDGYISVF (182 aa)) folds into the Rho-GAP domain. The Ras-associating domain occupies 1113–1206 (GDLIMEVYIE…ASLLLRKVSM (94 aa)). Positions 1219–1321 (ESPRVGLLRC…WTTSILKAQH (103 aa)) constitute a PH 5 domain. The residue at position 1344 (T1344) is a Phosphothreonine. Y1399 and Y1404 each carry phosphotyrosine. The span at 1425–1439 (WSAKSDPSLTSQRSF) shows a compositional bias: polar residues. The disordered stretch occupies residues 1425–1538 (WSAKSDPSLT…SNPPSSQPLT (114 aa)). A phosphoserine mark is found at S1438 and S1474. Composition is skewed to low complexity over residues 1476 to 1486 (EEQLLQELNNL) and 1494 to 1505 (ASCPESSSQPTS). Residues 1506-1529 (PQAPSPTSLPTPTPSLPTQPPCTS) show a composition bias toward pro residues.

In terms of assembly, interacts (via SAM domain) with INPPL1/SHIP2. Tyrosine phosphorylated at a low basal level. PDGF treatment stimulates phosphorylation. Tyrosine phosphorylation is increased in cells that are in the process of becoming attached to a substrate and that start spreading and flattening.

The protein resides in the cytoplasm. The protein localises to the cell membrane. Its subcellular location is the cytoskeleton. It localises to the cell projection. It is found in the lamellipodium. The protein resides in the ruffle. Functionally, phosphatidylinositol 3,4,5-trisphosphate-dependent GTPase-activating protein that modulates actin cytoskeleton remodeling by regulating ARF and RHO family members. Is activated by phosphatidylinositol 3,4,5-trisphosphate (PtdIns(3,4,5)P3) binding. Can be activated by phosphatidylinositol 3,4-bisphosphate (PtdIns(3,4,5)P2) binding, albeit with lower efficiency. Acts preferentially on ARF5 and on RHOA. This Mus musculus (Mouse) protein is Arf-GAP with Rho-GAP domain, ANK repeat and PH domain-containing protein 3 (Arap3).